Reading from the N-terminus, the 319-residue chain is Urease accessory protein UreD (319 aa).

The tract at residues 284-319 (RLSTPQPPREWPLQEEGTFSNERFTKDHQSPSASPH) is disordered.

This sequence belongs to the UreD family. As to quaternary structure, ureD, UreF and UreG form a complex that acts as a GTP-hydrolysis-dependent molecular chaperone, activating the urease apoprotein by helping to assemble the nickel containing metallocenter of UreC. The UreE protein probably delivers the nickel.

Its subcellular location is the cytoplasm. In terms of biological role, required for maturation of urease via the functional incorporation of the urease nickel metallocenter. The protein is Urease accessory protein UreD of Prochlorococcus marinus (strain MIT 9313).